Consider the following 152-residue polypeptide: Small ribosomal subunit protein uS19u (152 aa).

Belongs to the universal ribosomal protein uS19 family.

The protein resides in the cytoplasm. This is Small ribosomal subunit protein uS19u (RPS15A) from Arabidopsis thaliana (Mouse-ear cress).